A 299-amino-acid chain; its full sequence is Acetylglutamate kinase (299 aa).

Residues 64 to 65, R86, and N197 contribute to the substrate site; that span reads GG.

It belongs to the acetylglutamate kinase family. ArgB subfamily.

Its subcellular location is the cytoplasm. It carries out the reaction N-acetyl-L-glutamate + ATP = N-acetyl-L-glutamyl 5-phosphate + ADP. It participates in amino-acid biosynthesis; L-arginine biosynthesis; N(2)-acetyl-L-ornithine from L-glutamate: step 2/4. Functionally, catalyzes the ATP-dependent phosphorylation of N-acetyl-L-glutamate. This chain is Acetylglutamate kinase, found in Sulfurihydrogenibium sp. (strain YO3AOP1).